A 291-amino-acid polypeptide reads, in one-letter code: Kidney mitochondrial carrier protein 1 (291 aa).

Ser-2 carries the post-translational modification N-acetylserine. Solcar repeat units lie at residues 7 to 96 (KPFV…LKRL), 104 to 189 (ETLP…TKKH), and 198 to 289 (DTVY…LKKL). Helical transmembrane passes span 9–26 (FVYG…TFPI), 71–89 (GIAP…KIGT), 105–124 (TLPI…STIA), 164–183 (GVSL…LPVY), 204–224 (FLSS…VDVV), and 264–283 (GFWP…FVTY).

It belongs to the mitochondrial carrier (TC 2.A.29) family. Interacts with VDAC1.

Its subcellular location is the mitochondrion inner membrane. The enzyme catalyses sulfite(in) + sulfate(out) = sulfite(out) + sulfate(in). It carries out the reaction thiosulfate(in) + sulfate(out) = thiosulfate(out) + sulfate(in). It catalyses the reaction sulfate(out) + phosphate(in) = sulfate(in) + phosphate(out). The catalysed reaction is oxalate(in) + sulfate(out) = oxalate(out) + sulfate(in). The enzyme catalyses malonate(in) + sulfate(out) = malonate(out) + sulfate(in). It carries out the reaction maleate(in) + sulfate(out) = maleate(out) + sulfate(in). It catalyses the reaction (S)-malate(in) + sulfate(out) = (S)-malate(out) + sulfate(in). The catalysed reaction is (3S)-citramalate(in) + sulfate(out) = (3S)-citramalate(out) + sulfate(in). The enzyme catalyses (3R)-citramalate(in) + sulfate(out) = (3R)-citramalate(out) + sulfate(in). It carries out the reaction sulfate(out) + succinate(in) = sulfate(in) + succinate(out). It catalyses the reaction (S,S)-tartrate(in) + sulfate(out) = (S,S)-tartrate(out) + sulfate(in). The catalysed reaction is (2R,3R)-tartrate(in) + sulfate(out) = (2R,3R)-tartrate(out) + sulfate(in). The enzyme catalyses D-aspartate(in) + sulfate(out) = D-aspartate(out) + sulfate(in). It carries out the reaction L-aspartate(in) + sulfate(out) = L-aspartate(out) + sulfate(in). It catalyses the reaction sulfate(in) = sulfate(out). The catalysed reaction is phosphate(in) = phosphate(out). The enzyme catalyses (S)-malate(out) = (S)-malate(in). Increased activity at pH 6.0. sulfate/sulfate exchange activity is inhibited strongly by pyridoxal 5'-phosphate, bathophenanthroline and the organic mercurials mersalyl, p-chloromercuribenzoate and HgCl2. Its function is as follows. Antiporter that transports inorganic anions (sulfate, sulfite, thiosulfate and phosphate) and, to a lesser extent, a variety of dicarboxylates (e.g. malonate, malate and citramalate) and, even more so, aspartate. The sulfate/sulfate exchange is much higher than the phosphate/phosphate and malate/malate exchanges. The transport affinities is higher for sulfate and thiosulfate than for any other substrate. May catalyze the export of sulfite and thiosulfate (the hydrogen sulfide degradation products) from the mitochondria, thereby modulating the level of the hydrogen sulfide. Also may mediate a very low unidirectional transport of sulfate, phosphate and (S)-malate. The protein is Kidney mitochondrial carrier protein 1 of Homo sapiens (Human).